The primary structure comprises 259 residues: uncharacterized protein (259 aa).

The next 3 helical transmembrane spans lie at 55 to 75 (ILILVLFSGTFLLSSYFSYLI), 85 to 105 (FPSITISLSSLLPPLIIFFSS), and 127 to 147 (FFFAFAVFFAASIAFLDLCCG).

The protein resides in the membrane. This is an uncharacterized protein from Arabidopsis thaliana (Mouse-ear cress).